A 436-amino-acid chain; its full sequence is Enolase (436 aa).

Residue Q167 participates in (2R)-2-phosphoglycerate binding. The active-site Proton donor is E209. D246, E291, and D318 together coordinate Mg(2+). (2R)-2-phosphoglycerate is bound by residues K343, R372, S373, and K394. The active-site Proton acceptor is K343.

Belongs to the enolase family. As to quaternary structure, component of the RNA degradosome, a multiprotein complex involved in RNA processing and mRNA degradation. Requires Mg(2+) as cofactor.

Its subcellular location is the cytoplasm. It is found in the secreted. The protein resides in the cell surface. It catalyses the reaction (2R)-2-phosphoglycerate = phosphoenolpyruvate + H2O. The protein operates within carbohydrate degradation; glycolysis; pyruvate from D-glyceraldehyde 3-phosphate: step 4/5. In terms of biological role, catalyzes the reversible conversion of 2-phosphoglycerate (2-PG) into phosphoenolpyruvate (PEP). It is essential for the degradation of carbohydrates via glycolysis. The sequence is that of Enolase from Glaesserella parasuis serovar 5 (strain SH0165) (Haemophilus parasuis).